The following is a 379-amino-acid chain: Anhydro-N-acetylmuramic acid kinase (379 aa).

9–16 (GTSADGVD) contributes to the ATP binding site.

Belongs to the anhydro-N-acetylmuramic acid kinase family.

The catalysed reaction is 1,6-anhydro-N-acetyl-beta-muramate + ATP + H2O = N-acetyl-D-muramate 6-phosphate + ADP + H(+). It participates in amino-sugar metabolism; 1,6-anhydro-N-acetylmuramate degradation. It functions in the pathway cell wall biogenesis; peptidoglycan recycling. Functionally, catalyzes the specific phosphorylation of 1,6-anhydro-N-acetylmuramic acid (anhMurNAc) with the simultaneous cleavage of the 1,6-anhydro ring, generating MurNAc-6-P. Is required for the utilization of anhMurNAc either imported from the medium or derived from its own cell wall murein, and thus plays a role in cell wall recycling. This Prochlorococcus marinus (strain MIT 9211) protein is Anhydro-N-acetylmuramic acid kinase.